Here is a 463-residue protein sequence, read N- to C-terminus: Chromosomal replication initiator protein DnaA (463 aa).

The tract at residues 1–83 is domain I, interacts with DnaA modulators; the sequence is MSTNQIILTD…LQLFQHYNNT (83 aa). Residues 83-124 form a domain II region; that stretch reads TIKSVEIITKELPGTSKTVIELPTKTFADIGSSELNAENIFS. The segment at 125–343 is domain III, AAA+ region; it reads TLDVRFTFDN…GALNKVIAHS (219 aa). ATP contacts are provided by Gly-171, Gly-173, Lys-174, and Thr-175. Positions 344–463 are domain IV, binds dsDNA; the sequence is NFTLKEITLE…INLLMKILQN (120 aa).

This sequence belongs to the DnaA family. In terms of assembly, oligomerizes as a right-handed, spiral filament on DNA at oriC.

Its subcellular location is the cytoplasm. Plays an essential role in the initiation and regulation of chromosomal replication. ATP-DnaA binds to the origin of replication (oriC) to initiate formation of the DNA replication initiation complex once per cell cycle. Binds the DnaA box (a 9 base pair repeat at the origin) and separates the double-stranded (ds)DNA. Forms a right-handed helical filament on oriC DNA; dsDNA binds to the exterior of the filament while single-stranded (ss)DNA is stabiized in the filament's interior. The ATP-DnaA-oriC complex binds and stabilizes one strand of the AT-rich DNA unwinding element (DUE), permitting loading of DNA polymerase. After initiation quickly degrades to an ADP-DnaA complex that is not apt for DNA replication. Binds acidic phospholipids. In Rickettsia canadensis (strain McKiel), this protein is Chromosomal replication initiator protein DnaA.